A 199-amino-acid polypeptide reads, in one-letter code: Pyridoxal 5'-phosphate synthase subunit PdxT (199 aa).

Residue 52–54 (GES) participates in L-glutamine binding. C84 functions as the Nucleophile in the catalytic mechanism. Residues R115 and 143 to 144 (IR) contribute to the L-glutamine site. Active-site charge relay system residues include H179 and E181.

The protein belongs to the glutaminase PdxT/SNO family. In terms of assembly, in the presence of PdxS, forms a dodecamer of heterodimers. Only shows activity in the heterodimer.

The enzyme catalyses aldehydo-D-ribose 5-phosphate + D-glyceraldehyde 3-phosphate + L-glutamine = pyridoxal 5'-phosphate + L-glutamate + phosphate + 3 H2O + H(+). It catalyses the reaction L-glutamine + H2O = L-glutamate + NH4(+). Its pathway is cofactor biosynthesis; pyridoxal 5'-phosphate biosynthesis. Functionally, catalyzes the hydrolysis of glutamine to glutamate and ammonia as part of the biosynthesis of pyridoxal 5'-phosphate. The resulting ammonia molecule is channeled to the active site of PdxS. This Methanosarcina acetivorans (strain ATCC 35395 / DSM 2834 / JCM 12185 / C2A) protein is Pyridoxal 5'-phosphate synthase subunit PdxT.